The chain runs to 527 residues: EGF domain-specific O-linked N-acetylglucosamine transferase (527 aa).

The signal sequence occupies residues 1 to 19 (MLMLLVFGVLLHEVPLSGQ). A Required for optimal activity motif is present at residues 295–297 (DYD). An N-linked (GlcNAc...) asparagine glycan is attached at Asn-354. A Prevents secretion from ER motif is present at residues 524-527 (HDEL).

This sequence belongs to the glycosyltransferase 61 family.

It localises to the endoplasmic reticulum lumen. It carries out the reaction L-seryl-[protein] + UDP-N-acetyl-alpha-D-glucosamine = 3-O-(N-acetyl-beta-D-glucosaminyl)-L-seryl-[protein] + UDP + H(+). The catalysed reaction is L-threonyl-[protein] + UDP-N-acetyl-alpha-D-glucosamine = 3-O-(N-acetyl-beta-D-glucosaminyl)-L-threonyl-[protein] + UDP + H(+). Catalyzes the transfer of a single N-acetylglucosamine from UDP-GlcNAc to a serine or threonine residue in extracellular proteins resulting in their modification with a beta-linked N-acetylglucosamine (O-GlcNAc). Specifically glycosylates the Thr residue located between the fifth and sixth conserved cysteines of folded EGF-like domains. This Rattus norvegicus (Rat) protein is EGF domain-specific O-linked N-acetylglucosamine transferase (Eogt).